Here is a 362-residue protein sequence, read N- to C-terminus: Mitochondrial glycine transporter (362 aa).

Solcar repeat units follow at residues Pro-22 to Ser-108, Leu-132 to Asp-236, and Arg-269 to Ser-354. A run of 6 helical transmembrane segments spans residues Leu-28 to Gln-53, Gly-83 to Trp-109, Leu-138 to Glu-163, Gly-211 to Lys-234, Ile-273 to Leu-299, and Gly-329 to Ile-347.

Belongs to the mitochondrial carrier (TC 2.A.29) family. SLC25A38 subfamily.

Its subcellular location is the mitochondrion inner membrane. It catalyses the reaction glycine(in) = glycine(out). Its function is as follows. Mitochondrial glycine transporter that imports glycine into the mitochondrial matrix. Plays an important role in providing glycine for the first enzymatic step in heme biosynthesis, the condensation of glycine with succinyl-CoA to produce 5-aminolevulinate (ALA) in the mitochondrial matrix. This is Mitochondrial glycine transporter from Candida albicans (strain SC5314 / ATCC MYA-2876) (Yeast).